A 312-amino-acid chain; its full sequence is Glyceraldehyde-3-phosphate dehydrogenase, cytosolic (312 aa).

NAD(+) contacts are provided by residues 5 to 6 (RI) and Asp-27. Residues 144–146 (SCT), Thr-175, 204–205 (TG), and Arg-227 each bind D-glyceraldehyde 3-phosphate. Residue Cys-145 is the Nucleophile of the active site. Asn-309 serves as a coordination point for NAD(+).

It belongs to the glyceraldehyde-3-phosphate dehydrogenase family. Homotetramer.

It localises to the cytoplasm. It catalyses the reaction D-glyceraldehyde 3-phosphate + phosphate + NAD(+) = (2R)-3-phospho-glyceroyl phosphate + NADH + H(+). The protein operates within carbohydrate degradation; glycolysis; pyruvate from D-glyceraldehyde 3-phosphate: step 1/5. Its function is as follows. Key enzyme in glycolysis that catalyzes the first step of the pathway by converting D-glyceraldehyde 3-phosphate (G3P) into 3-phospho-D-glyceroyl phosphate. Essential for the maintenance of cellular ATP levels and carbohydrate metabolism. The chain is Glyceraldehyde-3-phosphate dehydrogenase, cytosolic (GapC) from Scenedesmus vacuolatus (Green alga).